Reading from the N-terminus, the 176-residue chain is Large ribosomal subunit protein uL5 (176 aa).

It belongs to the universal ribosomal protein uL5 family. In terms of assembly, part of the 50S ribosomal subunit; contacts the 5S rRNA and probably tRNA. Forms a bridge to the 30S subunit in the 70S ribosome.

Its function is as follows. This is one of the proteins that bind and probably mediate the attachment of the 5S RNA into the large ribosomal subunit, where it forms part of the central protuberance. In the 70S ribosome it contacts protein S13 of the 30S subunit (bridge B1b), connecting the 2 subunits; this bridge is implicated in subunit movement. May contact the P site tRNA; the 5S rRNA and some of its associated proteins might help stabilize positioning of ribosome-bound tRNAs. In Picrophilus torridus (strain ATCC 700027 / DSM 9790 / JCM 10055 / NBRC 100828 / KAW 2/3), this protein is Large ribosomal subunit protein uL5.